The primary structure comprises 154 residues: Myoglobin (154 aa).

The region spanning 2-148 (GLSDGEWQLV…FRNDIAAKYK (147 aa)) is the Globin domain. Ser4 is subject to Phosphoserine. His65 serves as a coordination point for nitrite. An O2-binding site is contributed by His65. Thr68 bears the Phosphothreonine mark. Residue His94 participates in heme b binding.

This sequence belongs to the globin family. In terms of assembly, monomeric.

It is found in the cytoplasm. The protein resides in the sarcoplasm. The catalysed reaction is Fe(III)-heme b-[protein] + nitric oxide + H2O = Fe(II)-heme b-[protein] + nitrite + 2 H(+). It catalyses the reaction H2O2 + AH2 = A + 2 H2O. Functionally, monomeric heme protein which primary function is to store oxygen and facilitate its diffusion within muscle tissues. Reversibly binds oxygen through a pentacoordinated heme iron and enables its timely and efficient release as needed during periods of heightened demand. Depending on the oxidative conditions of tissues and cells, and in addition to its ability to bind oxygen, it also has a nitrite reductase activity whereby it regulates the production of bioactive nitric oxide. Under stress conditions, like hypoxia and anoxia, it also protects cells against reactive oxygen species thanks to its pseudoperoxidase activity. The chain is Myoglobin (MB) from Ondatra zibethicus (Muskrat).